Here is a 430-residue protein sequence, read N- to C-terminus: Serine--tRNA ligase (430 aa).

T237–E239 serves as a coordination point for L-serine. R268 to E270 is a binding site for ATP. Residue E291 participates in L-serine binding. E355–S358 provides a ligand contact to ATP. S391 is a binding site for L-serine.

This sequence belongs to the class-II aminoacyl-tRNA synthetase family. Type-1 seryl-tRNA synthetase subfamily. In terms of assembly, homodimer. The tRNA molecule binds across the dimer.

It localises to the cytoplasm. It carries out the reaction tRNA(Ser) + L-serine + ATP = L-seryl-tRNA(Ser) + AMP + diphosphate + H(+). The enzyme catalyses tRNA(Sec) + L-serine + ATP = L-seryl-tRNA(Sec) + AMP + diphosphate + H(+). Its pathway is aminoacyl-tRNA biosynthesis; selenocysteinyl-tRNA(Sec) biosynthesis; L-seryl-tRNA(Sec) from L-serine and tRNA(Sec): step 1/1. In terms of biological role, catalyzes the attachment of serine to tRNA(Ser). Is also able to aminoacylate tRNA(Sec) with serine, to form the misacylated tRNA L-seryl-tRNA(Sec), which will be further converted into selenocysteinyl-tRNA(Sec). The polypeptide is Serine--tRNA ligase (Shigella boydii serotype 18 (strain CDC 3083-94 / BS512)).